The sequence spans 362 residues: Heme A synthase (362 aa).

The next 5 membrane-spanning stretches (helical) occupy residues 15–35 (VRIW…VGGA), 104–124 (VIGI…AIAP), 129–149 (ALWA…WMVA), 161–181 (VRLA…VWTL), and 200–220 (AIAL…VAGL). H264 provides a ligand contact to heme. The next 3 membrane-spanning stretches (helical) occupy residues 266 to 285 (MMAY…ALRA), 293 to 313 (GALW…LTLL), and 316 to 336 (VPIG…TLAV). H324 provides a ligand contact to heme.

The protein belongs to the COX15/CtaA family. Type 2 subfamily. As to quaternary structure, interacts with CtaB. The cofactor is heme b.

The protein resides in the cell membrane. It catalyses the reaction Fe(II)-heme o + 2 A + H2O = Fe(II)-heme a + 2 AH2. The protein operates within porphyrin-containing compound metabolism; heme A biosynthesis; heme A from heme O: step 1/1. Functionally, catalyzes the conversion of heme O to heme A by two successive hydroxylations of the methyl group at C8. The first hydroxylation forms heme I, the second hydroxylation results in an unstable dihydroxymethyl group, which spontaneously dehydrates, resulting in the formyl group of heme A. This chain is Heme A synthase, found in Rhodopseudomonas palustris (strain BisB5).